The chain runs to 273 residues: Oligodendrocyte transcription factor 3 (273 aa).

Over residues 1–14 (MNSDSSSVSSRASS) the composition is skewed to low complexity. The disordered stretch occupies residues 1-72 (MNSDSSSVSS…KAAGESSKYK (72 aa)). Positions 24 to 34 (DHHHRHHHHHQ) are enriched in basic residues. The segment covering 37 to 47 (RLNSVSSTQGD) has biased composition (polar residues). The stretch at 69-90 (SKYKIKKQLSEQDLQQLRLKIN) forms a coiled coil. Positions 84–138 (QLRLKINGRERKRMHDLNLAMDGLREVMPYAHGPSVRKLSKIATLLLARNYILML) constitute a bHLH domain.

Weakly expressed, mainly in non-neural tissues.

It localises to the nucleus. Functionally, may determine the distinct specification program of class A neurons in the dorsal part of the spinal cord and suppress specification of class B neurons. The polypeptide is Oligodendrocyte transcription factor 3 (Olig3) (Mus musculus (Mouse)).